We begin with the raw amino-acid sequence, 88 residues long: UPF0298 protein BC_3932 (88 aa).

The protein belongs to the UPF0298 family.

It localises to the cytoplasm. The protein is UPF0298 protein BC_3932 of Bacillus cereus (strain ATCC 14579 / DSM 31 / CCUG 7414 / JCM 2152 / NBRC 15305 / NCIMB 9373 / NCTC 2599 / NRRL B-3711).